Here is a 205-residue protein sequence, read N- to C-terminus: MGRYLGPLTKVSRRLGVFVGGSLKAFQKRNFPPGQHGRVQGRKVKLSDYAIRLQEKQKLRYLYGGIREKQFKRYFDEAARSAGNTGQILLQLLERRLDNVVYRLGFAKTRRQARQLVRHGHFLVNGRKVDIPSYRVDPGDIIELREKSRNSPLFKENLESRDPRSIPNWLELDKENFRGKVLEIPQEIELEIPVNVQLIIEFYSM.

The S4 RNA-binding domain maps to 95–163 (RRLDNVVYRL…FKENLESRDP (69 aa)).

It belongs to the universal ribosomal protein uS4 family. Part of the 30S ribosomal subunit. Contacts protein S5. The interaction surface between S4 and S5 is involved in control of translational fidelity.

Functionally, one of the primary rRNA binding proteins, it binds directly to 16S rRNA where it nucleates assembly of the body of the 30S subunit. With S5 and S12 plays an important role in translational accuracy. In Persephonella marina (strain DSM 14350 / EX-H1), this protein is Small ribosomal subunit protein uS4.